The sequence spans 158 residues: Cyclic pyranopterin monophosphate synthase (158 aa).

Substrate is bound by residues Met74–His76 and Met112–Glu113. Asp127 is a catalytic residue.

Belongs to the MoaC family. As to quaternary structure, homohexamer; trimer of dimers.

It carries out the reaction (8S)-3',8-cyclo-7,8-dihydroguanosine 5'-triphosphate = cyclic pyranopterin phosphate + diphosphate. Its pathway is cofactor biosynthesis; molybdopterin biosynthesis. Functionally, catalyzes the conversion of (8S)-3',8-cyclo-7,8-dihydroguanosine 5'-triphosphate to cyclic pyranopterin monophosphate (cPMP). This Helicobacter pylori (strain P12) protein is Cyclic pyranopterin monophosphate synthase.